We begin with the raw amino-acid sequence, 156 residues long: Ribosomal RNA large subunit methyltransferase H (156 aa).

Residues L74, G105, and 124–129 each bind S-adenosyl-L-methionine; that span reads LSKLTL.

This sequence belongs to the RNA methyltransferase RlmH family. Homodimer.

The protein localises to the cytoplasm. The catalysed reaction is pseudouridine(1915) in 23S rRNA + S-adenosyl-L-methionine = N(3)-methylpseudouridine(1915) in 23S rRNA + S-adenosyl-L-homocysteine + H(+). Its function is as follows. Specifically methylates the pseudouridine at position 1915 (m3Psi1915) in 23S rRNA. The protein is Ribosomal RNA large subunit methyltransferase H of Legionella pneumophila (strain Paris).